A 228-amino-acid chain; its full sequence is MNACERLSRVLERIQKACERAGRGENCAKLLGASKTVPPEVIREFYNCGLKVYGENRVQEFLKKYEALKDLDLEWHFIGRLQTNKVKYLMGKVVLIHSLDRKNLADEIQKRAFKNNIVQDVLIEVNVGGEETKGGVEPENLKELFEYTLELPNVKVLGLMTIPPYLENPEDVRPYFRKLRELRDELQREYNVALPHLSMGMSHDFEVAIEEGATIVRIGTLLFGERKY.

Position 35 is an N6-(pyridoxal phosphate)lysine (K35).

Belongs to the pyridoxal phosphate-binding protein YggS/PROSC family.

Pyridoxal 5'-phosphate (PLP)-binding protein, which is involved in PLP homeostasis. This chain is Pyridoxal phosphate homeostasis protein, found in Aquifex aeolicus (strain VF5).